Here is a 209-residue protein sequence, read N- to C-terminus: MKLAKLIPKRFFIRSKDRSTVSKSPTAFSFGSASSSSGQDCKNSGGDGGGGSVTPTSILPEVPSPYSYVEILQAFKLIDRDNDGAVSRHDLESLLSRLGPDPLTEEEINVMLKEVDCDGDGTIRLEELASRVVSLDPARDSTELKETFEFFDADRDGLISADELLRVFSTIGDERCTLDDCKRMIADVDEDGDGFVCFTEFSRMMDLQR.

A disordered region spans residues 22 to 59; it reads SKSPTAFSFGSASSSSGQDCKNSGGDGGGGSVTPTSIL. The span at 27-38 shows a compositional bias: low complexity; that stretch reads AFSFGSASSSSG. EF-hand domains follow at residues 66-101, 103-138, 139-174, and 176-209; these read YSYV…LGPD, LTEE…LDPA, RDST…IGDE, and CTLD…DLQR. Positions 79, 81, 83, and 90 each coordinate Ca(2+). Ca(2+) contacts are provided by aspartate 152, aspartate 154, aspartate 156, glutamate 163, aspartate 189, aspartate 191, aspartate 193, and glutamate 200.

Functionally, potential calcium sensor. This Arabidopsis thaliana (Mouse-ear cress) protein is Probable calcium-binding protein CML36 (CML36).